Here is a 301-residue protein sequence, read N- to C-terminus: Probable alpha-L-glutamate ligase 2 (301 aa).

In terms of domain architecture, ATP-grasp spans 104 to 287 (MQLLSRKGIG…VASMIIEFIV (184 aa)). ATP contacts are provided by residues Lys-141, 178 to 179 (EY), Asp-187, and 211 to 213 (RSN). Mg(2+)-binding residues include Asp-248, Glu-260, and Asn-262. 3 residues coordinate Mn(2+): Asp-248, Glu-260, and Asn-262.

It belongs to the RimK family. It depends on Mg(2+) as a cofactor. The cofactor is Mn(2+).

In Pseudoalteromonas atlantica (strain T6c / ATCC BAA-1087), this protein is Probable alpha-L-glutamate ligase 2.